A 163-amino-acid chain; its full sequence is Calmodulin (163 aa).

N-acetylalanine is present on alanine 2. 4 consecutive EF-hand domains span residues 11–46 (EQIA…LGQN), 47–82 (PTEA…KMKE), 84–119 (DHED…LGEK), and 120–155 (LSEE…GATD). Ca(2+) contacts are provided by aspartate 24, aspartate 26, aspartate 28, threonine 30, glutamate 35, aspartate 60, aspartate 62, asparagine 64, threonine 66, glutamate 71, aspartate 97, aspartate 99, asparagine 101, glutamate 108, aspartate 133, aspartate 135, aspartate 137, glutamine 139, and glutamate 144.

Belongs to the calmodulin family. In terms of assembly, associates with the spoke-associated complex containing CFAP61, CFAP91 and CFAP251; the association is calcium sensitive. In terms of processing, trimethylation of Lys-119 observed in other calmodulins is absent here.

It localises to the cytoplasm. The protein localises to the cytoskeleton. Its subcellular location is the flagellum axoneme. Calmodulin mediates the control of a large number of enzymes, ion channels and other proteins by Ca(2+). Among the enzymes to be stimulated by the calmodulin-Ca(2+) complex are a number of protein kinases and phosphatases. In Chlamydomonas reinhardtii (Chlamydomonas smithii), this protein is Calmodulin.